A 203-amino-acid chain; its full sequence is CASP-like protein 2U5 (203 aa).

Over 1–31 the chain is Cytoplasmic; the sequence is MSEHRIPVAADKQISPPISAGEQKGCKGLKR. A helical membrane pass occupies residues 32-52; that stretch reads TDLMLRFAAFVCCAVTMVVLI. At 53 to 84 the chain is on the extracellular side; the sequence is TDKQTSAIQVPGFNNLTITKTVSFDLAKAFVY. The N-linked (GlcNAc...) asparagine glycan is linked to asparagine 67. A helical membrane pass occupies residues 85–105; that stretch reads LVSAAGIGAGYTLLVLVLSII. Residues 106-111 are Cytoplasmic-facing; sequence SAERSK. A helical transmembrane segment spans residues 112–132; that stretch reads AIAWFIFVFDQLITYVLLAAA. Over 133–164 the chain is Extracellular; the sequence is AASTEVAYMGAHAPPEASWLKVCSLFGRFCHQ. Residues 165-185 traverse the membrane as a helical segment; that stretch reads LGASLVTSFISTVLFAFSAAI. Residues 186 to 203 are Cytoplasmic-facing; the sequence is SAYYLFSNTNVRPAYSKG.

This sequence belongs to the Casparian strip membrane proteins (CASP) family. In terms of assembly, homodimer and heterodimers.

It localises to the cell membrane. The sequence is that of CASP-like protein 2U5 from Selaginella moellendorffii (Spikemoss).